The sequence spans 307 residues: Porphobilinogen deaminase (307 aa).

Cys241 carries the S-(dipyrrolylmethanemethyl)cysteine modification.

This sequence belongs to the HMBS family. In terms of assembly, monomer. Requires dipyrromethane as cofactor.

It catalyses the reaction 4 porphobilinogen + H2O = hydroxymethylbilane + 4 NH4(+). It participates in porphyrin-containing compound metabolism; protoporphyrin-IX biosynthesis; coproporphyrinogen-III from 5-aminolevulinate: step 2/4. In terms of biological role, tetrapolymerization of the monopyrrole PBG into the hydroxymethylbilane pre-uroporphyrinogen in several discrete steps. The sequence is that of Porphobilinogen deaminase from Coxiella burnetii (strain CbuK_Q154) (Coxiella burnetii (strain Q154)).